The sequence spans 66 residues: Dermaseptin PD-3-7 (66 aa).

Residues 1 to 22 (MSFMKKSLLLVLFLGVVSLSNC) form the signal peptide. A propeptide spanning residues 23 to 40 (EEEKGENENEDHEEHHEE) is cleaved from the precursor.

Expressed by the skin glands.

It is found in the secreted. Possesses a potent antimicrobial activity against Gram-positive and Gram-negative bacteria. Probably acts by disturbing membrane functions with its amphipathic structure. The protein is Dermaseptin PD-3-7 of Agalychnis dacnicolor (Giant Mexican leaf frog).